Consider the following 319-residue polypeptide: Free fatty acid receptor 3 (319 aa).

At 1–15 the chain is on the extracellular side; that stretch reads MGTSFFLGNYWLFFS. Residues 16 to 36 form a helical membrane-spanning segment; sequence VYLLVFLVGLPLNVMALVVFV. Residues 37-43 lie on the Cytoplasmic side of the membrane; it reads GKLRRRP. Residues 44–64 form a helical membrane-spanning segment; sequence VAVDLLLLNLTISDLLLLLFL. The Extracellular segment spans residues 65–98; that stretch reads PFRMVEAACGMRWLLPFIFCPLSGFLFFTTIYLT. A disulfide bond links cysteine 84 and cysteine 165. Residues 99-119 form a helical membrane-spanning segment; the sequence is SLFLTAVSIERFLSVAYPLWY. At 120-127 the chain is on the cytoplasmic side; that stretch reads KTRPRLAQ. The chain crosses the membrane as a helical span at residues 128–148; it reads AGLVSVVCWFLASAHCSVVYI. Over 149–183 the chain is Extracellular; the sequence is TEYWGNATYSQGTNGTCYLEFREDQLAILLPVRLE. N-linked (GlcNAc...) asparagine glycosylation is found at asparagine 154 and asparagine 162. Residues 184–206 form a helical membrane-spanning segment; sequence MAVVLFMVPLCITSYCYSRLVWI. At 207–218 the chain is on the cytoplasmic side; it reads LSRGASRRRRKR. Residues 219–239 form a helical membrane-spanning segment; the sequence is IMGLLAATLLIFFVCFGPYNM. The Extracellular portion of the chain corresponds to 240–254; the sequence is SHVVGYVSRESPSWR. Residues 255–275 traverse the membrane as a helical segment; it reads SYVLLLSTLNSCIDPLVFYFS. Residues 276–319 are Cytoplasmic-facing; that stretch reads SSKFQADFHQLLGRLLRTCVPWTQQVSLELKVKNGEEPSKECPS.

The protein belongs to the G-protein coupled receptor 1 family. In terms of tissue distribution, expressed in white adipose tissue and skeletal muscle (at protein level). Abundantly expressed in sympathetic ganglia such as the superior cervical ganglion. Also expressed by intestinal endocrine cells.

The protein resides in the cell membrane. G protein-coupled receptor that is activated by a major product of dietary fiber digestion, the short chain fatty acids (SCFAs), and that plays a role in the regulation of whole-body energy homeostasis and in intestinal immunity. In omnivorous mammals, the short chain fatty acids acetate, propionate and butyrate are produced primarily by the gut microbiome that metabolizes dietary fibers. SCFAs serve as a source of energy but also act as signaling molecules. That G protein-coupled receptor is probably coupled to the pertussis toxin-sensitive, G(i/o)-alpha family of G proteins. Its activation results in the formation of inositol 1,4,5-trisphosphate, the mobilization of intracellular calcium, the phosphorylation of the MAPK3/ERK1 and MAPK1/ERK2 kinases and the inhibition of intracellular cAMP accumulation. Activated by SCFAs and by beta-hydroxybutyrate, a ketone body produced by the liver upon starvation, it inhibits N-type calcium channels and modulates the activity of sympathetic neurons through a signaling cascade involving the beta and gamma subunits of its coupled G protein, phospholipase C and MAP kinases. Thereby, it may regulate energy expenditure through the control of the sympathetic nervous system that controls for instance heart rate. Upon activation by SCFAs accumulating in the intestine, it may also signal to the brain via neural circuits which in turn would regulate intestinal gluconeogenesis. May also control the production of hormones involved in whole-body energy homeostasis. May for instance, regulate blood pressure through renin secretion. May also regulate secretion of the PYY peptide by enteroendocrine cells and control gut motility, intestinal transit rate, and the harvesting of energy from SCFAs produced by gut microbiota. May also indirectly regulate the production of LEP/Leptin, a hormone acting on the CNS to inhibit food intake, in response to the presence of short-chain fatty acids in the intestine. Finally, may also play a role in glucose homeostasis. Besides its role in energy homeostasis, may play a role in intestinal immunity. May mediate the activation of the inflammatory and immune response by SCFAs in the gut, regulating the rapid production of chemokines and cytokines by intestinal epithelial cells. Exhibits an SCFA-independent constitutive G protein-coupled receptor activity. This chain is Free fatty acid receptor 3 (Ffar3), found in Mus musculus (Mouse).